A 206-amino-acid polypeptide reads, in one-letter code: Small ribosomal subunit protein uS4 (206 aa).

The 61-residue stretch at Gly96 to Lys156 folds into the S4 RNA-binding domain.

This sequence belongs to the universal ribosomal protein uS4 family. In terms of assembly, part of the 30S ribosomal subunit. Contacts protein S5. The interaction surface between S4 and S5 is involved in control of translational fidelity.

Its function is as follows. One of the primary rRNA binding proteins, it binds directly to 16S rRNA where it nucleates assembly of the body of the 30S subunit. With S5 and S12 plays an important role in translational accuracy. This is Small ribosomal subunit protein uS4 from Glaesserella parasuis serovar 5 (strain SH0165) (Haemophilus parasuis).